The sequence spans 254 residues: 3-deoxy-manno-octulosonate cytidylyltransferase (254 aa).

This sequence belongs to the KdsB family.

Its subcellular location is the cytoplasm. It carries out the reaction 3-deoxy-alpha-D-manno-oct-2-ulosonate + CTP = CMP-3-deoxy-beta-D-manno-octulosonate + diphosphate. The protein operates within nucleotide-sugar biosynthesis; CMP-3-deoxy-D-manno-octulosonate biosynthesis; CMP-3-deoxy-D-manno-octulosonate from 3-deoxy-D-manno-octulosonate and CTP: step 1/1. Its pathway is bacterial outer membrane biogenesis; lipopolysaccharide biosynthesis. Functionally, activates KDO (a required 8-carbon sugar) for incorporation into bacterial lipopolysaccharide in Gram-negative bacteria. This Polynucleobacter asymbioticus (strain DSM 18221 / CIP 109841 / QLW-P1DMWA-1) (Polynucleobacter necessarius subsp. asymbioticus) protein is 3-deoxy-manno-octulosonate cytidylyltransferase.